Here is a 525-residue protein sequence, read N- to C-terminus: MTVVPGDHLLEPEAAGGGGGDPPQGGCVSGGGCDRYEPLPPALPAAGEQDCCGERVVINISGLRFETQLKTLCQFPETLLGDPKRRMRYFDPLRNEYFFDRNRPSFDAILYYYQSGGRIRRPVNVPIDIFSEEIRFYQLGEEAMEKFREDEGFLREEERPLPRRDFQRQVWLLFEYPESSGPARGIAIVSVLVILISIVIFCLETLPEFRDEKDYPASPSQDVFEAANNSTSGASSGASSFSDPFFVVETLCIIWFSFELLVRFFACPSKATFSRNIMNLIDIVAIIPYFITLGTELAERQGNGQQAMSLAILRVIRLVRVFRIFKLSRHSKGLQILGQTLKASMRELGLLIFFLFIGVILFSSAVYFAEADDPSSGFNSIPDAFWWAVVTMTTVGYGDMHPVTIGGKIVGSLCAIAGVLTIALPVPVIVSNFNYFYHRETEGEEQAQYMHVGSCQHLSSSAEELRKARSNSTLSKSEYMVIEEGGMNHSAFPQTPFKTGNSTATCTTNNNPNSCVNIKKIFTDV.

A disordered region spans residues 1-23 (MTVVPGDHLLEPEAAGGGGGDPP). The Cytoplasmic segment spans residues 1 to 184 (MTVVPGDHLL…EYPESSGPAR (184 aa)). Residues 185-203 (GIAIVSVLVILISIVIFCL) form a helical membrane-spanning segment. Topologically, residues 204–244 (ETLPEFRDEKDYPASPSQDVFEAANNSTSGASSGASSFSDP) are extracellular. An N-linked (GlcNAc...) asparagine glycan is attached at asparagine 229. A helical membrane pass occupies residues 245–266 (FFVVETLCIIWFSFELLVRFFA). The S-palmitoyl cysteine moiety is linked to residue cysteine 267. At 267-277 (CPSKATFSRNI) the chain is on the cytoplasmic side. A helical membrane pass occupies residues 278 to 298 (MNLIDIVAIIPYFITLGTELA). The Extracellular segment spans residues 299-312 (ERQGNGQQAMSLAI). A helical; Voltage-sensor transmembrane segment spans residues 313–331 (LRVIRLVRVFRIFKLSRHS). The Cytoplasmic segment spans residues 332–347 (KGLQILGQTLKASMRE). The helical transmembrane segment at 348 to 367 (LGLLIFFLFIGVILFSSAVY) threads the bilayer. The Extracellular segment spans residues 368–408 (FAEADDPSSGFNSIPDAFWWAVVTMTTVGYGDMHPVTIGGK). A Selectivity filter motif is present at residues 394–399 (TVGYGD). A helical transmembrane segment spans residues 409 to 431 (IVGSLCAIAGVLTIALPVPVIVS). At 432 to 525 (NFNYFYHRET…VNIKKIFTDV (94 aa)) the chain is on the cytoplasmic side. An interaction with KCNE4 region spans residues 432 to 525 (NFNYFYHRET…VNIKKIFTDV (94 aa)). At tyrosine 449 the chain carries Phosphotyrosine. The residue at position 470 (serine 470) is a Phosphoserine; by PKA. Residues 523–525 (TDV) carry the PDZ-binding motif.

Belongs to the potassium channel family. A (Shaker) (TC 1.A.1.2) subfamily. Kv1.3/KCNA3 sub-subfamily. In terms of assembly, homotetramer. Forms heterooligomers with KCNE4 which inhibits KCNA3 activity by impairing localization to the cell membrane. The stoichiometry of KCNA3 and KCNE4 in the heterooligomers are 4:1, 4:2, 4:3 or 4:4 respectively. Increasing the number of KCNE4 subunits steadily slows the activation KCNA3 and decreases its abundance at the cell membrane. However, a single subunit of KCNE4 is sufficient for the cooperative enhancement of the inactivating function of the channel. Interacts with SEC24D; this interaction is reduced in the presence of KCNE4. Interacts with DLG1, DLG2 and DLG4 via their PDZ domains. In terms of processing, phosphorylation on Tyr-449 inhibits its channel activity. N-glycosylation promotes the cell surface expression.

It localises to the cell membrane. It catalyses the reaction K(+)(in) = K(+)(out). Activity is up-regulated by JAK2. Functionally, mediates the voltage-dependent potassium ion permeability of excitable membranes. Assuming opened or closed conformations in response to the voltage difference across the membrane, the protein forms a potassium-selective channel through which potassium ions may pass in accordance with their electrochemical gradient. The protein is Potassium voltage-gated channel subfamily A member 3 (Kcna3) of Rattus norvegicus (Rat).